A 96-amino-acid chain; its full sequence is uncharacterized protein (96 aa).

3 consecutive transmembrane segments (helical) span residues 3–23 (KLTIFSGGLGAVFSVLAQLFA), 30–50 (TLGNLWFLGALAGIITMLASI), and 68–88 (IGLLGTGLVYIIPTLFNIIII).

It localises to the cell membrane. This is an uncharacterized protein from Bacillus subtilis (strain 168).